We begin with the raw amino-acid sequence, 278 residues long: MDVRQSIHSAHAKTLDTQGLRNEFLVEKVFVADEYTMVYSHIDRIIVGGIMPITKTVSVGGEVGKQLGVSYFLERRELGVINIGGAGTITVDGQCYEIGHRDALYVGKGAKEVVFASIDTATPAKFYYNCAPAHTTYPTKKVTPDEVSPVTLGDNLTSNRRTINKYFVPDVLETCQLSMGLTELAPGNLWNTMPCHTHERRMEVYFYFNMDDDACVFHMMGQPQETRHIVMHNEQAVISPSWSIHSGVGTKAYTFIWGMVGENQVFDDMDHVAVKDLR.

Residues H196, H198, E203, and H245 each contribute to the Zn(2+) site.

This sequence belongs to the KduI family. Zn(2+) serves as cofactor.

The catalysed reaction is 5-dehydro-4-deoxy-D-glucuronate = 3-deoxy-D-glycero-2,5-hexodiulosonate. It participates in glycan metabolism; pectin degradation; 2-dehydro-3-deoxy-D-gluconate from pectin: step 4/5. In terms of biological role, catalyzes the isomerization of 5-dehydro-4-deoxy-D-glucuronate to 3-deoxy-D-glycero-2,5-hexodiulosonate. The polypeptide is 4-deoxy-L-threo-5-hexosulose-uronate ketol-isomerase (Shigella sonnei (strain Ss046)).